The primary structure comprises 338 residues: Heat-inducible transcription repressor HrcA (338 aa).

Belongs to the HrcA family.

Negative regulator of class I heat shock genes (grpE-dnaK-dnaJ and groELS operons). Prevents heat-shock induction of these operons. In Polaromonas sp. (strain JS666 / ATCC BAA-500), this protein is Heat-inducible transcription repressor HrcA.